A 602-amino-acid polypeptide reads, in one-letter code: Elongation factor 4 (602 aa).

A tr-type G domain is found at 7-189; sequence KYIRNFCIIA…KIVDMIPCPE (183 aa). GTP contacts are provided by residues 19–24 and 136–139; these read DHGKST and NKID.

Belongs to the TRAFAC class translation factor GTPase superfamily. Classic translation factor GTPase family. LepA subfamily.

It localises to the cell membrane. It carries out the reaction GTP + H2O = GDP + phosphate + H(+). Functionally, required for accurate and efficient protein synthesis under certain stress conditions. May act as a fidelity factor of the translation reaction, by catalyzing a one-codon backward translocation of tRNAs on improperly translocated ribosomes. Back-translocation proceeds from a post-translocation (POST) complex to a pre-translocation (PRE) complex, thus giving elongation factor G a second chance to translocate the tRNAs correctly. Binds to ribosomes in a GTP-dependent manner. The protein is Elongation factor 4 of Ruminiclostridium cellulolyticum (strain ATCC 35319 / DSM 5812 / JCM 6584 / H10) (Clostridium cellulolyticum).